The sequence spans 268 residues: MHHTNKKKYGQNFLTDVNLLNKIVTKASITDKNVLEIGPGKGALTKIIVPQAKNVLAYEIDATLKPFLNFENHNNVNIIYDDFLKRDLLKDFDHYFSPNSQLSLIGNLPYYITSPILFKIIDTPQINDATIMIQKEVGMRLLAQPNNKNYNALSVIIQFLFSIEKIQEVKRHMFFPTPKVDSIVIKLTKNNNILPTFLKQFIKFVKNSFKQKRKTLLNNLSCQFLLSKETIIPFFLQHHIPLQIRAEQVTLETFQKLTVKWFIFLNMS.

Residues Asn-12, Leu-14, Gly-38, Glu-59, Asp-82, and Asn-107 each coordinate S-adenosyl-L-methionine.

Belongs to the class I-like SAM-binding methyltransferase superfamily. rRNA adenine N(6)-methyltransferase family. RsmA subfamily.

Its subcellular location is the cytoplasm. It carries out the reaction adenosine(1518)/adenosine(1519) in 16S rRNA + 4 S-adenosyl-L-methionine = N(6)-dimethyladenosine(1518)/N(6)-dimethyladenosine(1519) in 16S rRNA + 4 S-adenosyl-L-homocysteine + 4 H(+). Its function is as follows. Specifically dimethylates two adjacent adenosines (A1518 and A1519) in the loop of a conserved hairpin near the 3'-end of 16S rRNA in the 30S particle. May play a critical role in biogenesis of 30S subunits. This Aster yellows witches'-broom phytoplasma (strain AYWB) protein is Ribosomal RNA small subunit methyltransferase A.